Consider the following 108-residue polypeptide: Large ribosomal subunit protein uL24 (108 aa).

It belongs to the universal ribosomal protein uL24 family. Part of the 50S ribosomal subunit.

One of two assembly initiator proteins, it binds directly to the 5'-end of the 23S rRNA, where it nucleates assembly of the 50S subunit. Functionally, one of the proteins that surrounds the polypeptide exit tunnel on the outside of the subunit. The chain is Large ribosomal subunit protein uL24 from Geobacter metallireducens (strain ATCC 53774 / DSM 7210 / GS-15).